The sequence spans 135 residues: C-type natriuretic peptide (135 aa).

An N-terminal signal peptide occupies residues 1 to 25 (MSGHTSFYCGLLLLLLIQVQARPRA). Positions 26 to 113 (DDSLQVLSRL…PLRFKGRSKK (88 aa)) are excised as a propeptide. The disordered stretch occupies residues 46-67 (EELNNEAQEISPAASLPDLNTD). Cys119 and Cys135 form a disulfide bridge.

The protein belongs to the natriuretic peptide family.

It is found in the secreted. Its function is as follows. Hormone which may be vasoactive and natriuretic. Has a cGMP-stimulating activity. The chain is C-type natriuretic peptide from Squalus acanthias (Spiny dogfish).